A 919-amino-acid polypeptide reads, in one-letter code: Hyphally regulated cell wall protein 1 (919 aa).

The first 20 residues, Met1 to Ala20, serve as a signal peptide directing secretion. N-linked (GlcNAc...) asparagine glycosylation occurs at Asn236. The disordered stretch occupies residues Ser332–Ser483. Low complexity predominate over residues Thr344–Thr392. The span at Asn393–Gly414 shows a compositional bias: polar residues. Positions Ser415–Ser475 are enriched in low complexity. N-linked (GlcNAc...) asparagine glycans are attached at residues Asn449, Asn488, Asn580, Asn585, Asn607, Asn619, Asn631, Asn639, Asn647, and Asn693. The segment covering Asp567–Asn590 has biased composition (low complexity). A disordered region spans residues Asp567–Glu839. Gly residues-rich tracts occupy residues Asn607–Ser665 and Glu675–Ser707. The span at Gln708 to Asn724 shows a compositional bias: low complexity. Over residues Pro725 to Ser783 the composition is skewed to gly residues. Asn729, Asn741, and Asn755 each carry an N-linked (GlcNAc...) asparagine glycan. Positions Glu784–Gly798 are enriched in low complexity. Positions Ala799–Ser811 are enriched in basic and acidic residues. Residues Ala823–Pro833 show a composition bias toward polar residues. Residues Asn879 and Asn895 are each glycosylated (N-linked (GlcNAc...) asparagine). Asn895 carries GPI-anchor amidated asparagine lipidation. Residues Gly896–Met919 constitute a propeptide, removed in mature form.

This sequence belongs to the HYR1/IFF family. In terms of assembly, component of a multiprotein complex of 250 kDa composed of at least HYR1, MP65, and PRA1. The GPI-anchor is attached to the protein in the endoplasmic reticulum and serves to target the protein to the cell surface. There, the glucosamine-inositol phospholipid moiety is cleaved off and the GPI-modified mannoprotein is covalently attached via its lipidless GPI glycan remnant to the 1,6-beta-glucan of the outer cell wall layer.

The protein resides in the secreted. Its subcellular location is the cell wall. The protein localises to the membrane. Functionally, GPI-anchored hyphal cell wall protein required for hyphal growth and virulence. Involved in innate immune cell evasion through conferring resistance to neutrophil killing. Binds kininogen, the proteinaceous kinin precursor, and contributes to trigger the kinin-forming cascade on the cell surface. Production of kinins is often involved in the human host defense against microbial infections. This chain is Hyphally regulated cell wall protein 1 (HYR1), found in Candida albicans (strain SC5314 / ATCC MYA-2876) (Yeast).